Consider the following 404-residue polypeptide: Phosphoglycerate kinase (404 aa).

Substrate is bound by residues 22-24, R37, 60-63, R119, and R156; these read DLN and HLGR. ATP-binding positions include K206, G302, E333, and 359 to 362; that span reads GGDS.

Belongs to the phosphoglycerate kinase family. As to quaternary structure, monomer.

The protein localises to the cytoplasm. It catalyses the reaction (2R)-3-phosphoglycerate + ATP = (2R)-3-phospho-glyceroyl phosphate + ADP. It participates in carbohydrate degradation; glycolysis; pyruvate from D-glyceraldehyde 3-phosphate: step 2/5. The sequence is that of Phosphoglycerate kinase from Clavibacter michiganensis subsp. michiganensis (strain NCPPB 382).